A 307-amino-acid chain; its full sequence is Ribonuclease Z (307 aa).

Histidine 63, histidine 65, aspartate 67, histidine 68, histidine 141, aspartate 212, and histidine 270 together coordinate Zn(2+). The active-site Proton acceptor is aspartate 67.

The protein belongs to the RNase Z family. In terms of assembly, homodimer. It depends on Zn(2+) as a cofactor.

It catalyses the reaction Endonucleolytic cleavage of RNA, removing extra 3' nucleotides from tRNA precursor, generating 3' termini of tRNAs. A 3'-hydroxy group is left at the tRNA terminus and a 5'-phosphoryl group is left at the trailer molecule.. In terms of biological role, zinc phosphodiesterase, which displays some tRNA 3'-processing endonuclease activity. Probably involved in tRNA maturation, by removing a 3'-trailer from precursor tRNA. The polypeptide is Ribonuclease Z (Bacillus mycoides (strain KBAB4) (Bacillus weihenstephanensis)).